Reading from the N-terminus, the 476-residue chain is Adenosylhomocysteinase (476 aa).

Positions 67, 142, and 202 each coordinate substrate. NAD(+) is bound at residue 203 to 205 (TTT). Residues Lys-232 and Asp-236 each coordinate substrate. NAD(+)-binding positions include Asn-237, 266 to 271 (GYGDVG), Glu-289, Asn-324, 345 to 347 (IGH), and Asn-390.

The protein belongs to the adenosylhomocysteinase family. Requires NAD(+) as cofactor.

The protein localises to the cytoplasm. It carries out the reaction S-adenosyl-L-homocysteine + H2O = L-homocysteine + adenosine. It functions in the pathway amino-acid biosynthesis; L-homocysteine biosynthesis; L-homocysteine from S-adenosyl-L-homocysteine: step 1/1. In terms of biological role, may play a key role in the regulation of the intracellular concentration of adenosylhomocysteine. This chain is Adenosylhomocysteinase, found in Prochlorococcus marinus (strain MIT 9303).